The sequence spans 169 residues: Der GTPase-activating protein YihI (169 aa).

2 disordered regions span residues 1-99 (MKPS…QAEL) and 146-169 (SYDD…LRGN). Basic residues predominate over residues 10–19 (SKGHAKARRK). Positions 20–30 (TREELDQEARD) are enriched in basic and acidic residues. The segment covering 31 to 40 (RKRQKKRRGH) has biased composition (basic residues). Positions 49–58 (GNTTSGSKGQ) are enriched in polar residues. Over residues 147–159 (YDDDEEEEEDEKQ) the composition is skewed to acidic residues. The span at 160-169 (EDMMRLLRGN) shows a compositional bias: basic and acidic residues.

This sequence belongs to the YihI family. In terms of assembly, interacts with Der.

Its function is as follows. A GTPase-activating protein (GAP) that modifies Der/EngA GTPase function. May play a role in ribosome biogenesis. In Escherichia coli O81 (strain ED1a), this protein is Der GTPase-activating protein YihI.